The chain runs to 150 residues: 3-dehydroquinate dehydratase (150 aa).

Tyr-26 (proton acceptor) is an active-site residue. Residues Asn-77, His-83, and Asp-90 each contribute to the substrate site. His-103 serves as the catalytic Proton donor. Residues 104–105 (LS) and Arg-114 each bind substrate.

It belongs to the type-II 3-dehydroquinase family. In terms of assembly, homododecamer.

The enzyme catalyses 3-dehydroquinate = 3-dehydroshikimate + H2O. Its pathway is metabolic intermediate biosynthesis; chorismate biosynthesis; chorismate from D-erythrose 4-phosphate and phosphoenolpyruvate: step 3/7. Catalyzes a trans-dehydration via an enolate intermediate. This Mannheimia succiniciproducens (strain KCTC 0769BP / MBEL55E) protein is 3-dehydroquinate dehydratase.